The primary structure comprises 1109 residues: Hybrid signal transduction histidine kinase F (1109 aa).

In terms of domain architecture, PAC spans 237 to 289 (LSTETTITKKNGEKYPAEVFVKEISDIHSNSIGIMIIVRDITDQIRLKEMNIE). One can recognise a Histidine kinase domain in the interval 324 to 547 (TISHEIRTPL…LFSVTLNFEQ (224 aa)). His327 carries the post-translational modification Phosphohistidine; by autocatalysis. A coiled-coil region spans residues 719–760 (SNLIQTISQIDNQQQQQQQQLQQQEQEQQHQQQQLQQEQQFV). Low complexity predominate over residues 739-758 (LQQQEQEQQHQQQQLQQEQQ). The disordered stretch occupies residues 739–819 (LQQQEQEQQH…TSSDSGESDE (81 aa)). Positions 767–782 (DSSEKKTTPKKDRGKY) are enriched in basic and acidic residues. Residues 928-1048 (RILLVDDNAV…PLGELVKKYL (121 aa)) enclose the Response regulatory domain. 4-aspartylphosphate is present on Asp977. The span at 1052 to 1099 (NNNNNNNNNNNNNNNNNSNNNNSNSNSNPNSNSNSNSNSNSNPNQNPN) shows a compositional bias: low complexity. A disordered region spans residues 1052–1109 (NNNNNNNNNNNNNNNNNSNNNNSNSNSNPNSNSNSNSNSNSNPNQNPNYCNNLPTDFI). The span at 1100–1109 (YCNNLPTDFI) shows a compositional bias: polar residues.

The enzyme catalyses ATP + protein L-histidine = ADP + protein N-phospho-L-histidine.. Its function is as follows. Acts as a receptor histidine kinase for a signal transduction pathway. This protein undergoes an ATP-dependent autophosphorylation at a conserved histidine residue in the kinase core, and a phosphoryl group is then transferred to a conserved aspartate residue in the receiver domain. The sequence is that of Hybrid signal transduction histidine kinase F (dhkF) from Dictyostelium discoideum (Social amoeba).